The following is a 903-amino-acid chain: Protein translocase subunit SecA (903 aa).

ATP is bound by residues glutamine 89, 107–111 (GEGKT), and aspartate 502. Zn(2+)-binding residues include cysteine 886, cysteine 888, cysteine 897, and histidine 898.

This sequence belongs to the SecA family. Monomer and homodimer. Part of the essential Sec protein translocation apparatus which comprises SecA, SecYEG and auxiliary proteins SecDF-YajC and YidC. Zn(2+) is required as a cofactor.

It localises to the cell inner membrane. Its subcellular location is the cytoplasm. The enzyme catalyses ATP + H2O + cellular proteinSide 1 = ADP + phosphate + cellular proteinSide 2.. Part of the Sec protein translocase complex. Interacts with the SecYEG preprotein conducting channel. Has a central role in coupling the hydrolysis of ATP to the transfer of proteins into and across the cell membrane, serving both as a receptor for the preprotein-SecB complex and as an ATP-driven molecular motor driving the stepwise translocation of polypeptide chains across the membrane. The polypeptide is Protein translocase subunit SecA (Sinorhizobium medicae (strain WSM419) (Ensifer medicae)).